Consider the following 520-residue polypeptide: Amine oxidase [flavin-containing] B (520 aa).

Over 1 to 489 (MNSKCDVVVV…TFLERHLPSV (489 aa)) the chain is Cytoplasmic. K52 is modified (N6-acetyllysine). C397 is modified (S-8alpha-FAD cysteine). A helical; Anchor for type IV membrane protein membrane pass occupies residues 490-516 (PGLLRLIRLTTVVSAVALGFLAQKRGL). Residues 517–520 (LLRI) lie on the Mitochondrial intermembrane side of the membrane.

The protein belongs to the flavin monoamine oxidase family. In terms of assembly, monomer, homo- or heterodimer (containing two subunits of similar size). Each subunit contains a covalently bound flavin. Enzymatically active as monomer. The cofactor is FAD.

The protein resides in the mitochondrion outer membrane. It catalyses the reaction a secondary aliphatic amine + O2 + H2O = a primary amine + an aldehyde + H2O2. The catalysed reaction is (R)-adrenaline + O2 + H2O = (R)-3,4-dihydroxymandelaldehyde + methylamine + H2O2. The enzyme catalyses a primary methyl amine + O2 + H2O = an aldehyde + H2O2 + NH4(+). It carries out the reaction benzylamine + O2 + H2O = benzaldehyde + H2O2 + NH4(+). It catalyses the reaction dopamine + O2 + H2O = 3,4-dihydroxyphenylacetaldehyde + H2O2 + NH4(+). The catalysed reaction is tyramine + O2 + H2O = (4-hydroxyphenyl)acetaldehyde + H2O2 + NH4(+). The enzyme catalyses (R)-noradrenaline + O2 + H2O = (R)-3,4-dihydroxymandelaldehyde + H2O2 + NH4(+). It carries out the reaction 2-phenylethylamine + O2 + H2O = 2-phenylacetaldehyde + H2O2 + NH4(+). It catalyses the reaction N-acetylputrescine + O2 + H2O = 4-acetamidobutanal + H2O2 + NH4(+). Its function is as follows. Catalyzes the oxidative deamination of primary and some secondary amines such as neurotransmitters, and exogenous amines including the tertiary amine, neurotoxin 1-methyl-4-phenyl-1,2,3,6-tetrahydropyridine (MPTP), with concomitant reduction of oxygen to hydrogen peroxide and participates in the metabolism of neuroactive and vasoactive amines in the central nervous system and peripheral tissues. Preferentially degrades benzylamine and phenylethylamine. In Cavia porcellus (Guinea pig), this protein is Amine oxidase [flavin-containing] B.